The sequence spans 615 residues: Afadin- and alpha-actinin-binding protein (615 aa).

Coiled coils occupy residues 126 to 227 (KLGS…IAMD) and 266 to 293 (RQKQ…SLLS). Phosphoserine is present on residues Ser-290, Ser-293, Ser-313, and Ser-319. The disordered stretch occupies residues 293 to 316 (SPQKKKPRERAEDGTGTVAISDIE). The stretch at 375 to 461 (ISRQDHEQET…RSFTEAAIRL (87 aa)) forms a coiled coil. Ser-537, Ser-541, and Ser-543 each carry phosphoserine. A disordered region spans residues 567 to 615 (PEESKPSEVARESTDQKWSVQSRPSSREGCYSGCSSAFRSAHGDRDDLP). Positions 568–581 (EESKPSEVARESTD) are enriched in basic and acidic residues.

It belongs to the ADIP family. Interacts with SSX2 and SSX3. Does not interact with SSX1 and SSX4. Interacts with afadin and alpha-actinin. Interacts with VAV2. Interacts with PCM1. Interacts with WRAP73. As to expression, widely expressed.

It localises to the cell junction. It is found in the adherens junction. The protein resides in the nucleus. The protein localises to the cytoplasm. Its subcellular location is the cytoskeleton. It localises to the microtubule organizing center. It is found in the centrosome. The protein resides in the centriolar satellite. The protein localises to the cilium basal body. Belongs to an adhesion system, which plays a role in the organization of homotypic, interneuronal and heterotypic cell-cell adherens junctions (AJs). May connect the nectin-afadin and E-cadherin-catenin system through alpha-actinin and may be involved in organization of the actin cytoskeleton at AJs through afadin and alpha-actinin. Acts as a centrosome maturation factor, probably by maintaining the integrity of the pericentriolar material and proper microtubule nucleation at mitotic spindle poles. The function seems to implicate at least in part WRAP73; the SSX2IP:WRAP73 complex is proposed to act as regulator of spindle anchoring at the mitotic centrosome. Involved in cell movement: localizes at the leading edge of moving cells in response to PDGF and is required for the formation of the leading edge and the promotion of cell movement, possibly via activation of Rac signaling. Involved in ciliogenesis. It is required for targeted recruitment of the BBSome, CEP290, RAB8, and SSTR3 to the cilia. The chain is Afadin- and alpha-actinin-binding protein (Ssx2ip) from Mus musculus (Mouse).